We begin with the raw amino-acid sequence, 257 residues long: Granzyme M (257 aa).

Positions 1–23 (MEACVSSLLVLALGALSVGSSFG) are cleaved as a signal peptide. A propeptide spans 24–25 (TQ) (activation peptide). Residues 26–254 (IIGGREVIPH…YVSWIRKVTG (229 aa)) form the Peptidase S1 domain. Cys51 and Cys67 are disulfide-bonded. Catalysis depends on charge relay system residues His66 and Asp111. Disulfide bonds link Cys145–Cys213, Cys176–Cys192, and Cys203–Cys230. Residue Asn177 is glycosylated (N-linked (GlcNAc...) asparagine). Ser207 serves as the catalytic Charge relay system.

It belongs to the peptidase S1 family. Granzyme subfamily. Highly and constitutively expressed in activated natural killer (NK) cells.

It localises to the secreted. It is found in the cytoplasmic granule. Functionally, cleaves peptide substrates after methionine, leucine, and norleucine. Physiological substrates include EZR, alpha-tubulins and the apoptosis inhibitor BIRC5/Survivin. Promotes caspase activation and subsequent apoptosis of target cells. This is Granzyme M (GZMM) from Homo sapiens (Human).